Here is a 357-residue protein sequence, read N- to C-terminus: MELWQAFVQMVYTLTPWFDGTIASILIILIKAITLVIPLMLVVAYFTYAERKVIGYMQLRIGPNRVGPKGWLQPIADALKLMTKEIIFPTKANIYLFLLAPVLAIAPAIAVWVVIPFDEDIYITNLDISLLYVLAIGSIGVYGIILAGWASNSKYPLLGALRSASLLVSYEIVIGFALATVVMIAGSVNLNTIVQAQQGGIIYWNFIPLFPMMIIFFISALIETNRAPFDVVEGESEIVGGTHVEYSGMTFAVFFLAEYANMILMAVLAVVMFFGGWHSPFEAIPYLESAFSWVPGIIWLLAKTTFFMFLYLWVRATFPRFRYDQIMRLSWKVFLPITIIWIFVVALMTQLKLEPWF.

The next 8 helical transmembrane spans lie at 25–45 (ILII…VVAY), 94–114 (IYLF…VWVV), 130–150 (LLYV…AGWA), 166–186 (LLVS…MIAG), 201–221 (IIYW…ISAL), 254–274 (FFLA…VMFF), 294–314 (VPGI…YLWV), and 329–349 (LSWK…ALMT).

Belongs to the complex I subunit 1 family. As to quaternary structure, NDH-1 is composed of 14 different subunits. Subunits NuoA, H, J, K, L, M, N constitute the membrane sector of the complex.

The protein localises to the cell inner membrane. The catalysed reaction is a quinone + NADH + 5 H(+)(in) = a quinol + NAD(+) + 4 H(+)(out). In terms of biological role, NDH-1 shuttles electrons from NADH, via FMN and iron-sulfur (Fe-S) centers, to quinones in the respiratory chain. The immediate electron acceptor for the enzyme in this species is believed to be ubiquinone. Couples the redox reaction to proton translocation (for every two electrons transferred, four hydrogen ions are translocated across the cytoplasmic membrane), and thus conserves the redox energy in a proton gradient. This subunit may bind ubiquinone. This is NADH-quinone oxidoreductase subunit H from Ruthia magnifica subsp. Calyptogena magnifica.